Reading from the N-terminus, the 139-residue chain is Large ribosomal subunit protein uL16 (139 aa).

Residues 1–17 (MLIPRRTKHRKQHHPRR) are compositionally biased toward basic residues. Residues 1-24 (MLIPRRTKHRKQHHPRRTGAASGG) form a disordered region.

It belongs to the universal ribosomal protein uL16 family. As to quaternary structure, part of the 50S ribosomal subunit.

In terms of biological role, binds 23S rRNA and is also seen to make contacts with the A and possibly P site tRNAs. The protein is Large ribosomal subunit protein uL16 of Beutenbergia cavernae (strain ATCC BAA-8 / DSM 12333 / CCUG 43141 / JCM 11478 / NBRC 16432 / NCIMB 13614 / HKI 0122).